The following is a 423-amino-acid chain: MSYVIDRRLNGKNKSTVNRQRFLRRYRDHIKKAVEEAVSRRSITDMEHGEQISIPGRDIDEPVLHHGRGGKQTVVHPGNKEFTTGEHIARPQGGGGGKGPGKAGNSGEGMDEFSFQITQEEFLEFMFEDLELPNLVKRNLTGTDTFKTVRAGISNEGNPSRINIIRTLRSAHARRIALSGSSRAKLREATAELERMKREEPDNFGDIQELEVEIDRLKARIRRVPYLDTFDLKYNLLVKQPNPSSKAVMFCLMDVSGSMTQATKDIAKRFFILLYLFLKRNYDKIDVVFIRHHTSAREVDEEEFFYSRETGGTIVSSALKLMQEIMAARYPSSDWNIYAAQASDGDNWNDDSPICREILTKQIMPFVQYYTYVEITPREHQALWYEYERIGEDFADTFAQQQLVSAGDIYPVFRELFQRRLVS.

Residues 65 to 110 (HHGRGGKQTVVHPGNKEFTTGEHIARPQGGGGGKGPGKAGNSGEGM) form a disordered region. Positions 92–107 (QGGGGGKGPGKAGNSG) are enriched in gly residues.

This sequence belongs to the UPF0229 family.

The polypeptide is UPF0229 protein Psyr_4632 (Pseudomonas syringae pv. syringae (strain B728a)).